Consider the following 417-residue polypeptide: Gamma-glutamyl phosphate reductase (417 aa).

It belongs to the gamma-glutamyl phosphate reductase family.

The protein resides in the cytoplasm. It catalyses the reaction L-glutamate 5-semialdehyde + phosphate + NADP(+) = L-glutamyl 5-phosphate + NADPH + H(+). It functions in the pathway amino-acid biosynthesis; L-proline biosynthesis; L-glutamate 5-semialdehyde from L-glutamate: step 2/2. In terms of biological role, catalyzes the NADPH-dependent reduction of L-glutamate 5-phosphate into L-glutamate 5-semialdehyde and phosphate. The product spontaneously undergoes cyclization to form 1-pyrroline-5-carboxylate. The polypeptide is Gamma-glutamyl phosphate reductase (Serratia proteamaculans (strain 568)).